Reading from the N-terminus, the 104-residue chain is Fluoride-specific ion channel FluC 2 (104 aa).

Transmembrane regions (helical) follow at residues 22–42 (IGPY…LAAV), 48–68 (LVMA…STLA), and 82–102 (MLLG…WCGL). Positions 59 and 62 each coordinate Na(+).

Belongs to the fluoride channel Fluc/FEX (TC 1.A.43) family.

The protein localises to the cell membrane. The catalysed reaction is fluoride(in) = fluoride(out). Na(+) is not transported, but it plays an essential structural role and its presence is essential for fluoride channel function. In terms of biological role, fluoride-specific ion channel. Important for reducing fluoride concentration in the cell, thus reducing its toxicity. The polypeptide is Fluoride-specific ion channel FluC 2 (Corynebacterium diphtheriae (strain ATCC 700971 / NCTC 13129 / Biotype gravis)).